The sequence spans 116 residues: Large ribosomal subunit protein bL19 (116 aa).

The protein belongs to the bacterial ribosomal protein bL19 family.

Functionally, this protein is located at the 30S-50S ribosomal subunit interface and may play a role in the structure and function of the aminoacyl-tRNA binding site. This Pseudomonas putida (strain ATCC 700007 / DSM 6899 / JCM 31910 / BCRC 17059 / LMG 24140 / F1) protein is Large ribosomal subunit protein bL19.